Reading from the N-terminus, the 38-residue chain is Phi-Lf prophage-derived putative minor coat protein (38 aa).

In Xanthomonas campestris pv. campestris (strain ATCC 33913 / DSM 3586 / NCPPB 528 / LMG 568 / P 25), this protein is Phi-Lf prophage-derived putative minor coat protein (gIX-1).